The following is a 591-amino-acid chain: Parathyroid hormone/parathyroid hormone-related peptide receptor (591 aa).

The N-terminal stretch at Met-1–Val-26 is a signal peptide. The Extracellular portion of the chain corresponds to Asp-27–Gly-188. Intrachain disulfides connect Cys-48/Cys-117, Cys-108/Cys-148, and Cys-131/Cys-170. A disordered region spans residues Lys-67 to Arg-104. A compositionally biased stretch (basic and acidic residues) spans Glu-81 to Asp-96. Asn-151, Asn-161, Asn-166, and Asn-176 each carry an N-linked (GlcNAc...) asparagine glycan. The helical transmembrane segment at Met-189 to Phe-212 threads the bilayer. The Cytoplasmic segment spans residues Arg-213–Arg-219. The helical transmembrane segment at Asn-220–Val-239 threads the bilayer. At Lys-240–Arg-282 the chain is on the extracellular side. A helical membrane pass occupies residues Val-283–Leu-306. The Cytoplasmic portion of the chain corresponds to His-307–Tyr-320. A helical membrane pass occupies residues Leu-321–Val-342. The Extracellular portion of the chain corresponds to Arg-343–Trp-361. A helical membrane pass occupies residues Ile-362–Ile-382. Over Arg-383–Ser-409 the chain is Cytoplasmic. The chain crosses the membrane as a helical span at residues Thr-410 to Pro-428. The Extracellular portion of the chain corresponds to Tyr-429 to Gln-440. The chain crosses the membrane as a helical span at residues Met-441–Asn-463. Residues Gly-464–Met-591 are Cytoplasmic-facing. Residues Trp-474–Trp-477 carry the Important for interaction with G proteins motif.

This sequence belongs to the G-protein coupled receptor 2 family. As to quaternary structure, homodimer in the absence of bound ligand. Peptide hormone binding leads to dissociation of the homodimer. Post-translationally, N-glycosylated. Detected in kidney.

It is found in the cell membrane. Its function is as follows. G-protein-coupled receptor for parathyroid hormone (PTH) and for parathyroid hormone-related peptide (PTHLH). Ligand binding causes a conformation change that triggers signaling via guanine nucleotide-binding proteins (G proteins) and modulates the activity of downstream effectors, such as adenylate cyclase (cAMP). PTH1R is coupled to G(s) G alpha proteins and mediates activation of adenylate cyclase activity. PTHLH dissociates from PTH1R more rapidly than PTH; as consequence, the cAMP response induced by PTHLH decays faster than the response induced by PTH. The protein is Parathyroid hormone/parathyroid hormone-related peptide receptor (Pth1r) of Mus musculus (Mouse).